Reading from the N-terminus, the 176-residue chain is Sarcoplasmic calcium-binding protein (176 aa).

The residue at position 1 (Thr-1) is an N-acetylthreonine. EF-hand domains follow at residues 3 to 38 (YLVS…FTDL), 55 to 90 (KWWD…AFLA), 91 to 126 (TMTA…FGHE), and 127 to 160 (NESV…SFVT). Ca(2+) contacts are provided by Asp-16, Asn-18, Asp-20, and Asn-27. Positions 104, 106, 108, 110, and 115 each coordinate Ca(2+).

Like parvalbumins, SCPs seem to be more abundant in fast contracting muscles, but no functional relationship can be established from this distribution. This chain is Sarcoplasmic calcium-binding protein, found in Mizuhopecten yessoensis (Japanese scallop).